The following is a 682-amino-acid chain: Potassium-transporting ATPase ATP-binding subunit (682 aa).

4 consecutive transmembrane segments (helical) span residues 34-54, 62-82, 219-239, and 254-274; these read PVMF…IAMA, ALFS…ANFA, IALT…TATL, and VLVA…LSAI. The 4-aspartylphosphate intermediate role is filled by D307. ATP contacts are provided by residues D344, E348, 377–384, and K395; that span reads FTAQSRMS. Mg(2+) contacts are provided by D518 and D522. 3 helical membrane-spanning segments follow: residues 588 to 608, 616 to 636, and 656 to 676; these read FAII…LNIM, AILS…PLAL, and IYGL…DLLL.

The protein belongs to the cation transport ATPase (P-type) (TC 3.A.3) family. Type IA subfamily. In terms of assembly, the system is composed of three essential subunits: KdpA, KdpB and KdpC.

It localises to the cell inner membrane. The enzyme catalyses K(+)(out) + ATP + H2O = K(+)(in) + ADP + phosphate + H(+). In terms of biological role, part of the high-affinity ATP-driven potassium transport (or Kdp) system, which catalyzes the hydrolysis of ATP coupled with the electrogenic transport of potassium into the cytoplasm. This subunit is responsible for energy coupling to the transport system and for the release of the potassium ions to the cytoplasm. This is Potassium-transporting ATPase ATP-binding subunit from Escherichia coli O139:H28 (strain E24377A / ETEC).